We begin with the raw amino-acid sequence, 559 residues long: Terpene synthase 1 (559 aa).

Asp312, Asp316, Asp456, and Glu464 together coordinate Mg(2+). The DDXXD motif signature appears at Asp312 to Asp316.

Belongs to the terpene synthase family. Tpsa subfamily. Requires Mg(2+) as cofactor. It depends on Mn(2+) as a cofactor. In terms of tissue distribution, mostly expressed in stems and, to a lower extent, in leaves, roots and fruits.

The enzyme catalyses (2E,6E)-farnesyl diphosphate = (-)-(E)-beta-caryophyllene + diphosphate. The catalysed reaction is (2E,6E)-farnesyl diphosphate = alpha-humulene + diphosphate. Its pathway is secondary metabolite biosynthesis; terpenoid biosynthesis. In terms of biological role, sesquiterpene synthase involved in the biosynthesis of volatile compounds that contribute to the characteristic flavors of black pepper. Mediates the conversion of (2E,6E)-farnesyl diphosphate (FPP) into beta-caryophyllene and, as a minor compound, into alpha-humulene. In Piper nigrum (Black pepper), this protein is Terpene synthase 1.